A 742-amino-acid polypeptide reads, in one-letter code: Tegument protein UL47 (742 aa).

The segment covering 1–10 has biased composition (basic and acidic residues); that stretch reads MDAARDGRPE. 2 disordered regions span residues 1 to 128 and 155 to 199; these read MDAA…TAHL and EFPP…DDAA. The short motif at 10–30 is the Nuclear localization signal element; sequence ERRPRRSGTYRTHPFQRPSAR. The span at 18-37 shows a compositional bias: low complexity; sequence TYRTHPFQRPSARRSLLDAL. Residues 38-62 show a composition bias toward basic and acidic residues; that stretch reads RAADAEAAERPRVRRPRPDFQRPPD. The segment covering 63–88 has biased composition (acidic residues); that stretch reads EDTSEDENVYDYIDGDSSDSADDYDS. The short motif at 95 to 122 is the Nuclear export signal element; sequence RGPNHGAGDAMDTDAPPERAPEGGAPQD. The short motif at 485–495 is the Nuclear export signal element; the sequence is LSAYLTLFVAL.

This sequence belongs to the alphaherpesvirinae HHV-1 UL47 family. Interacts with US3 kinase. Interacts with UL31 and UL34; these interactions seem important for efficient virion nuclear egress. Interacts with UL41/VHS. Post-translationally, phosphorylated by US3. This phosphorylation is required for proper nuclear localization.

It is found in the virion tegument. The protein resides in the host nucleus. The protein localises to the host cytoplasm. In terms of biological role, tegument protein that can bind to various RNA transcripts. Plays a role in the attenuation of selective viral and cellular mRNA degradation by modulating the activity of host shutoff RNase UL41/VHS. Also plays a role in the primary envelopment of virions in the perinuclear space, probably by interacting with two nuclear egress proteins UL31 and UL34. This chain is Tegument protein UL47, found in Bos taurus (Bovine).